Reading from the N-terminus, the 898-residue chain is Phosphoenolpyruvate carboxylase (898 aa).

Residues His138 and Lys561 contribute to the active site.

The protein belongs to the PEPCase type 1 family. Mg(2+) serves as cofactor.

It catalyses the reaction oxaloacetate + phosphate = phosphoenolpyruvate + hydrogencarbonate. Functionally, forms oxaloacetate, a four-carbon dicarboxylic acid source for the tricarboxylic acid cycle. This chain is Phosphoenolpyruvate carboxylase, found in Streptococcus pneumoniae serotype 4 (strain ATCC BAA-334 / TIGR4).